Here is a 109-residue protein sequence, read N- to C-terminus: Iron-sulfur cluster assembly protein CyaY (109 aa).

The protein belongs to the frataxin family.

Functionally, involved in iron-sulfur (Fe-S) cluster assembly. May act as a regulator of Fe-S biogenesis. This is Iron-sulfur cluster assembly protein CyaY from Shewanella sp. (strain ANA-3).